The following is a 483-amino-acid chain: Glutamate--tRNA ligase (483 aa).

Residues 11–21 (PSPTGHLHIGN) carry the 'HIGH' region motif. Zn(2+)-binding residues include Cys108, Cys110, His135, and Asp137. A 'KMSKS' region motif is present at residues 252 to 256 (KLSKR). Residue Lys255 participates in ATP binding.

This sequence belongs to the class-I aminoacyl-tRNA synthetase family. Glutamate--tRNA ligase type 1 subfamily. Monomer. The cofactor is Zn(2+).

It localises to the cytoplasm. The catalysed reaction is tRNA(Glu) + L-glutamate + ATP = L-glutamyl-tRNA(Glu) + AMP + diphosphate. Its function is as follows. Catalyzes the attachment of glutamate to tRNA(Glu) in a two-step reaction: glutamate is first activated by ATP to form Glu-AMP and then transferred to the acceptor end of tRNA(Glu). This chain is Glutamate--tRNA ligase, found in Bacillus subtilis (strain 168).